The primary structure comprises 226 residues: Lipoprotein-releasing system ATP-binding protein LolD 1 (226 aa).

Residues 5–225 (LKLDGIRKSY…IVRVVDGKIA (221 aa)) form the ABC transporter domain. Residue 42–49 (GPSGSGKS) coordinates ATP.

It belongs to the ABC transporter superfamily. Lipoprotein translocase (TC 3.A.1.125) family. As to quaternary structure, the complex is composed of two ATP-binding proteins (LolD) and two transmembrane proteins (LolC and LolE).

It localises to the cell inner membrane. Functionally, part of the ABC transporter complex LolCDE involved in the translocation of mature outer membrane-directed lipoproteins, from the inner membrane to the periplasmic chaperone, LolA. Responsible for the formation of the LolA-lipoprotein complex in an ATP-dependent manner. The chain is Lipoprotein-releasing system ATP-binding protein LolD 1 from Rhodopseudomonas palustris (strain ATCC BAA-98 / CGA009).